A 292-amino-acid polypeptide reads, in one-letter code: MSAPRLIQRFARPSLSPFFLRTTLARRSFGSSAIRPKDDNGRAPSTAPEHREYQTNRPPNQHVPNTTSTMTRDFPKAGEKSVPPEFVSAADPNYKPADPYPGKVEHFTGGRQETGAQKPELGVGEMEGITFKVEPLKRTGEDVSTIRARLLYQSRKRGILESDLLLSTFADVYLSKMNKEQLQEYDRFLDENDWDIYYWATQDPPTEDNVAEDTPTETWKRTGAKSGEWAQTVGAYKAAYRPVPSRWADSEVLRLLRQHVQDNSATGFHAAKSKKTGGAGLGRMPNVQVFDS.

2 disordered regions span residues 27–68 and 266–292; these read RSFG…NTTS and TGFHAAKSKKTGGAGLGRMPNVQVFDS. The span at 55-68 shows a compositional bias: polar residues; the sequence is TNRPPNQHVPNTTS.

It belongs to the SDHAF2 family. Interacts with the flavoprotein subunit within the SDH catalytic dimer.

The protein localises to the mitochondrion matrix. Functionally, plays an essential role in the assembly of succinate dehydrogenase (SDH), an enzyme complex (also referred to as respiratory complex II) that is a component of both the tricarboxylic acid (TCA) cycle and the mitochondrial electron transport chain, and which couples the oxidation of succinate to fumarate with the reduction of ubiquinone (coenzyme Q) to ubiquinol. Required for flavinylation (covalent attachment of FAD) of the flavoprotein subunit of the SDH catalytic dimer. This is Succinate dehydrogenase assembly factor 2, mitochondrial from Aspergillus flavus (strain ATCC 200026 / FGSC A1120 / IAM 13836 / NRRL 3357 / JCM 12722 / SRRC 167).